Here is a 276-residue protein sequence, read N- to C-terminus: Large ribosomal subunit protein uL2 (276 aa).

The segment at 213–264 (WLGRRPHNRGVVMNPVDHPHGGGEGRTSGGRHPVTPWGKPTKGYKTRTNKRT) is disordered.

It belongs to the universal ribosomal protein uL2 family. Part of the 50S ribosomal subunit. Forms a bridge to the 30S subunit in the 70S ribosome.

Functionally, one of the primary rRNA binding proteins. Required for association of the 30S and 50S subunits to form the 70S ribosome, for tRNA binding and peptide bond formation. It has been suggested to have peptidyltransferase activity; this is somewhat controversial. Makes several contacts with the 16S rRNA in the 70S ribosome. In Granulibacter bethesdensis (strain ATCC BAA-1260 / CGDNIH1), this protein is Large ribosomal subunit protein uL2.